Here is a 946-residue protein sequence, read N- to C-terminus: Inositol-trisphosphate 3-kinase B (946 aa).

5 disordered regions span residues 19-128, 156-288, 308-472, 486-561, and 580-638; these read EMKS…EEAK, AQSS…TRSC, ARVT…GIPS, KDLK…RKAC, and GALE…HTLD. Ser43, Ser49, and Ser71 each carry phosphoserine. A compositionally biased stretch (low complexity) spans 83–105; it reads NSSSGSGSGSSGSSVSSPSWAGR. Residues Ser204 and Ser269 each carry the phosphoserine modification. Polar residues predominate over residues 396–411; it reads TTVSVQSAESSDSLSW. The span at 445 to 458 shows a compositional bias: low complexity; sequence GGSPTLGLLGGSPS. The segment covering 524–534 has biased composition (polar residues); sequence TGVQSEGTWES. Low complexity predominate over residues 599-612; it reads SSSSASSTGFSSSY. Residues Ser679, Lys690, 730-732, and Asp743 contribute to the ATP site; that span reads DDL. Substrate-binding residues include Lys745 and Arg766. Residues 768-776 form a calmodulin-binding region; sequence DMYQKMIEV. 793 to 800 is a binding site for substrate; it reads KPRYMQWR. ATP contacts are provided by Lys817 and Asp897. Lys900 is a substrate binding site.

Belongs to the inositol phosphokinase (IPK) family. In terms of assembly, interacts with DMTN.

It is found in the cytoplasm. The protein localises to the cytoskeleton. It localises to the endoplasmic reticulum. It catalyses the reaction 1D-myo-inositol 1,4,5-trisphosphate + ATP = 1D-myo-inositol 1,3,4,5-tetrakisphosphate + ADP + H(+). With respect to regulation, IP3K is activated by calcium and calmodulin. Form B is much more sensitive to calcium/calmodulin than form A. In terms of biological role, catalyzes the phosphorylation of 1D-myo-inositol 1,4,5-trisphosphate (InsP3) into 1D-myo-inositol 1,3,4,5-tetrakisphosphate and participates to the regulation of calcium homeostasis. In Homo sapiens (Human), this protein is Inositol-trisphosphate 3-kinase B.